A 402-amino-acid chain; its full sequence is Na(+)/H(+) antiporter NhaA 2 (402 aa).

11 helical membrane-spanning segments follow: residues 18 to 38 (AGGI…NTAL), 63 to 83 (ALLW…GLEV), 99 to 119 (SLPL…FYGI), 129 to 149 (GWAI…ALLG), 158 to 178 (ALLL…IAIF), 182 to 202 (GVEL…SAFG), 210 to 230 (IPYI…GVHA), 258 to 278 (ALHS…NAGV), 296 to 316 (IALG…WLAV), 329 to 349 (WLQV…SLFI), and 365 to 385 (IGVL…LVLG).

This sequence belongs to the NhaA Na(+)/H(+) (TC 2.A.33) antiporter family.

Its subcellular location is the cell inner membrane. The enzyme catalyses Na(+)(in) + 2 H(+)(out) = Na(+)(out) + 2 H(+)(in). Na(+)/H(+) antiporter that extrudes sodium in exchange for external protons. This Erythrobacter litoralis (strain HTCC2594) protein is Na(+)/H(+) antiporter NhaA 2.